A 187-amino-acid chain; its full sequence is Preprocaerulein clone PXC202 (187 aa).

Positions 1-9 are excised as a propeptide; that stretch reads NDERRFADG. The tract at residues 1–21 is disordered; that stretch reads NDERRFADGQQDYTGWMDFGR. A Sulfotyrosine modification is found at Y13. F19 carries the phenylalanine amide modification. Residues 23 to 73 constitute a propeptide that is removed on maturation; the sequence is DDEDDVNERDVRGFGSFLGKALKAALKIGANALGGSPQQREANDERRFADG. The residue at position 77 (Y77) is a Sulfotyrosine. A Phenylalanine amide modification is found at F83. The propeptide occupies 87–137; sequence DDEDDVNERDVRGFGSFLGKALKAALKIGANALGGSLQQREVNDERRFADG. Position 141 is a sulfotyrosine (Y141). Position 147 is a phenylalanine amide (F147). A propeptide spanning residues 151–152 is cleaved from the precursor; that stretch reads DG. The residue at position 156 (Y156) is a Sulfotyrosine. F162 is modified (phenylalanine amide). The propeptide occupies 166-187; that stretch reads DDEDDVHERDVRGFGSFLGKAL.

It belongs to the gastrin/cholecystokinin family. As to expression, expressed by the skin glands.

The protein localises to the secreted. Functionally, the pharmacological activities of caerulein are quite similar to the physiological activities of gastrin and related peptides. The protein is Preprocaerulein clone PXC202 of Xenopus laevis (African clawed frog).